The following is a 427-amino-acid chain: MSVSFENKETNRGVLTFTISQDQIKPELDRVFKSVKKSLNVPGFRKGHLPRPIFDQKFGEEALYQDAMNALLPNAYEAAVKEAGLEVVAQPKIDVTSMEKGQDWVITAEVVTKPEVKLGDYKNLEVSVDVEKEVTDADVEERIERERNNLAELVIKEAAAENGDTVVIDFVGSIDGVEFDGGKGENFSLGLGSGQFIPGFEDQLVGHSAGETVDVIVTFPEDYQAEDLAGKEAKFVTTIHEVKAKEVPALDDELAKDIDEEVETLADLKEKYRKELAAAKEETYKDAVEGAAIDTAVENAEIVELPEEMIHEEVHRSVNEFLGNLQRQGINPDMYFQITGTTQEDLHNQYQAEAESRTKTNLVIEAVAKAEGFDASEEEIQKEVEQLAADYNMEVAQVQNLLSADMLKHDITIKKAVELITSTATVK.

A PPIase FKBP-type domain is found at 163–248 (GDTVVIDFVG…IHEVKAKEVP (86 aa)).

This sequence belongs to the FKBP-type PPIase family. Tig subfamily.

It is found in the cytoplasm. It carries out the reaction [protein]-peptidylproline (omega=180) = [protein]-peptidylproline (omega=0). In terms of biological role, involved in protein export. Acts as a chaperone by maintaining the newly synthesized protein in an open conformation. Functions as a peptidyl-prolyl cis-trans isomerase. This is Trigger factor from Streptococcus pneumoniae serotype 2 (strain D39 / NCTC 7466).